Consider the following 389-residue polypeptide: Na(+)/H(+) antiporter NhaA (389 aa).

11 consecutive transmembrane segments (helical) span residues 17–37 (ILLL…LAGL), 59–79 (LLLW…GLEV), 95–115 (SLPT…YLLF), 124–144 (AGWA…MALL), 154–174 (VFLL…IALF), 177–197 (TDLS…LVAL), 213–233 (LVLW…GVII), 261–281 (FLIL…NMSL), 287–307 (PVPV…VMLF), 328–348 (IAPV…IASL), and 363–383 (LGTL…LSKV).

It belongs to the NhaA Na(+)/H(+) (TC 2.A.33) antiporter family.

The protein localises to the cell inner membrane. It carries out the reaction Na(+)(in) + 2 H(+)(out) = Na(+)(out) + 2 H(+)(in). Its function is as follows. Na(+)/H(+) antiporter that extrudes sodium in exchange for external protons. In Shewanella sp. (strain MR-7), this protein is Na(+)/H(+) antiporter NhaA.